The chain runs to 345 residues: Probable velvet family sexual development regulator LACBIDRAFT_317102 (345 aa).

Composition is skewed to polar residues over residues 1–13 and 24–38; these read MFTTHPQGRSYRS and EIQNSYDQHANNPPR. Disordered stretches follow at residues 1-43, 138-189, and 310-345; these read MFTT…TRRR, ESWT…SPSS, and RKRRKKGEIGSPLDDPKSKRKRTSLGSEDDEASDED. The Velvet domain maps to 62–306; it reads GQTIRAELDE…ARWGVRLNIR (245 aa). Composition is skewed to low complexity over residues 141-158 and 167-184; these read TSRSPTQTSFSSSSPTLS and SSPQTSSPTAAQSQASTP. Positions 336–345 are enriched in acidic residues; it reads SEDDEASDED.

It belongs to the velvet family.

It is found in the nucleus. Functionally, velvet-domain-containing protein that probably acts as a positive regulator of sexual development. The chain is Probable velvet family sexual development regulator LACBIDRAFT_317102 from Laccaria bicolor (strain S238N-H82 / ATCC MYA-4686) (Bicoloured deceiver).